The sequence spans 505 residues: Glutamate--tRNA ligase (505 aa).

A 'HIGH' region motif is present at residues 12–22 (PSPTGALHIGG). The short motif at 260–264 (KLSKR) is the 'KMSKS' region element. Lys-263 provides a ligand contact to ATP.

This sequence belongs to the class-I aminoacyl-tRNA synthetase family. Glutamate--tRNA ligase type 1 subfamily. Monomer.

The protein localises to the cytoplasm. The catalysed reaction is tRNA(Glu) + L-glutamate + ATP = L-glutamyl-tRNA(Glu) + AMP + diphosphate. Catalyzes the attachment of glutamate to tRNA(Glu) in a two-step reaction: glutamate is first activated by ATP to form Glu-AMP and then transferred to the acceptor end of tRNA(Glu). The polypeptide is Glutamate--tRNA ligase (Bacteroides fragilis (strain ATCC 25285 / DSM 2151 / CCUG 4856 / JCM 11019 / LMG 10263 / NCTC 9343 / Onslow / VPI 2553 / EN-2)).